The primary structure comprises 483 residues: Zinc finger CCCH domain-containing protein 25 (483 aa).

The segment at 157–184 (RNRAHICSFFIRGECTRGDECPYRHEMP) adopts a C3H1-type zinc-finger fold. The region spanning 228-301 (RTLYVGGLNS…QRLKLTWGRP (74 aa)) is the RRM domain. Disordered regions lie at residues 298-317 (WGRPQVPKPDQDGSNQQGSV) and 336-483 (PPML…GSSQ). Residues 336–351 (PPMLQYYMHPPPPQPP) are compositionally biased toward pro residues. The segment covering 370–380 (SSSKESGSSTS) has biased composition (low complexity). Positions 381–391 (DNRGASSSSYT) are enriched in polar residues. 2 stretches are compositionally biased toward low complexity: residues 392–401 (MPPHGHYPQH) and 409–423 (YGGYMQPPYQQYPPY). A compositionally biased stretch (pro residues) spans 438–459 (QPGPGSRPNPPHPSSVSAPPPD). Over residues 460–476 (SVSAAPSGSSQQSADAA) the composition is skewed to low complexity.

This Arabidopsis thaliana (Mouse-ear cress) protein is Zinc finger CCCH domain-containing protein 25.